The following is an 89-amino-acid chain: Large ribosomal subunit protein bL28 (89 aa).

It belongs to the bacterial ribosomal protein bL28 family.

The chain is Large ribosomal subunit protein bL28 from Chlamydia muridarum (strain MoPn / Nigg).